The sequence spans 423 residues: Histidine--tRNA ligase (423 aa).

Belongs to the class-II aminoacyl-tRNA synthetase family. As to quaternary structure, homodimer.

It localises to the cytoplasm. It catalyses the reaction tRNA(His) + L-histidine + ATP = L-histidyl-tRNA(His) + AMP + diphosphate + H(+). The chain is Histidine--tRNA ligase from Shewanella loihica (strain ATCC BAA-1088 / PV-4).